The following is a 236-amino-acid chain: Small ribosomal subunit protein uS2c (236 aa).

It belongs to the universal ribosomal protein uS2 family.

The protein resides in the plastid. Its subcellular location is the chloroplast. In Daucus carota (Wild carrot), this protein is Small ribosomal subunit protein uS2c (rps2).